Reading from the N-terminus, the 251-residue chain is Uroporphyrinogen-III synthase (251 aa).

The segment at 231–251 is disordered; that stretch reads PAPNPESLASSIVAFDEENSS.

The protein belongs to the uroporphyrinogen-III synthase family.

The catalysed reaction is hydroxymethylbilane = uroporphyrinogen III + H2O. The protein operates within porphyrin-containing compound metabolism; protoporphyrin-IX biosynthesis; coproporphyrinogen-III from 5-aminolevulinate: step 3/4. Catalyzes cyclization of the linear tetrapyrrole, hydroxymethylbilane, to the macrocyclic uroporphyrinogen III. The polypeptide is Uroporphyrinogen-III synthase (ups1) (Schizosaccharomyces pombe (strain 972 / ATCC 24843) (Fission yeast)).